Reading from the N-terminus, the 296-residue chain is LysM and putative peptidoglycan-binding domain-containing protein 4 (296 aa).

Residues 1–217 are Extracellular-facing; it reads MRHEELLTKT…PMDGADCGIQ (217 aa). Residues 29 to 67 are disordered; that stretch reads KNGSGDSGDSSEEESHRVVLRPRGKERHKSGVHQPPQAG. Asparagine 30 carries N-linked (GlcNAc...) asparagine glycosylation. The span at 46 to 59 shows a compositional bias: basic residues; the sequence is VVLRPRGKERHKSG. Residues 74-118 enclose the LysM domain; sequence LQRELAQEDSLNKLALQYGCKVADIKKVNNFIREQDLYALKSVKI. The chain crosses the membrane as a helical span at residues 218–238; sequence WWNAVFIMLLIGIVLPVFYLV. At 239–296 the chain is on the cytoplasmic side; the sequence is YFKIQASGETPNSLNTTVIPNGSMAMGTVPGQAPRLAVAVPAVTSADSQFSQTTQAGS.

Its subcellular location is the membrane. In Homo sapiens (Human), this protein is LysM and putative peptidoglycan-binding domain-containing protein 4 (LYSMD4).